A 278-amino-acid chain; its full sequence is Urease accessory protein UreD 3 (278 aa).

It belongs to the UreD family. UreD, UreF and UreG form a complex that acts as a GTP-hydrolysis-dependent molecular chaperone, activating the urease apoprotein by helping to assemble the nickel containing metallocenter of UreC. The UreE protein probably delivers the nickel.

It localises to the cytoplasm. In terms of biological role, required for maturation of urease via the functional incorporation of the urease nickel metallocenter. This is Urease accessory protein UreD 3 from Bradyrhizobium sp. (strain BTAi1 / ATCC BAA-1182).